A 128-amino-acid polypeptide reads, in one-letter code: Cystatin-12 (128 aa).

The N-terminal stretch at 1 to 21 is a signal peptide; that stretch reads MLWKSVLPVALIVLGIHDCSF. 2 disulfide bridges follow: Cys82/Cys92 and Cys105/Cys125. Asn122 carries N-linked (GlcNAc...) asparagine glycosylation.

The protein belongs to the cystatin family.

Its subcellular location is the secreted. Functionally, may play a specialized role in spermatogenesis. The protein is Cystatin-12 (Cst12) of Rattus norvegicus (Rat).